The following is a 292-amino-acid chain: 4-diphosphocytidyl-2-C-methyl-D-erythritol kinase (292 aa).

The active site involves lysine 20. Residue 103–113 participates in ATP binding; it reads PMGGGIGGGSS. The active site involves aspartate 145.

This sequence belongs to the GHMP kinase family. IspE subfamily.

It catalyses the reaction 4-CDP-2-C-methyl-D-erythritol + ATP = 4-CDP-2-C-methyl-D-erythritol 2-phosphate + ADP + H(+). It functions in the pathway isoprenoid biosynthesis; isopentenyl diphosphate biosynthesis via DXP pathway; isopentenyl diphosphate from 1-deoxy-D-xylulose 5-phosphate: step 3/6. Functionally, catalyzes the phosphorylation of the position 2 hydroxy group of 4-diphosphocytidyl-2C-methyl-D-erythritol. This is 4-diphosphocytidyl-2-C-methyl-D-erythritol kinase from Cupriavidus necator (strain ATCC 17699 / DSM 428 / KCTC 22496 / NCIMB 10442 / H16 / Stanier 337) (Ralstonia eutropha).